The chain runs to 206 residues: Ras-related protein Ral-B (206 aa).

21 to 29 serves as a coordination point for GTP; it reads GSGGVGKSA. Residues 43 to 51 carry the Effector region motif; the sequence is YEPTKADSY. Residues 68–72, 128–131, and 158–160 each bind GTP; these read DTAGQ, NKSD, and SAK. The disordered stretch occupies residues 181-206; that stretch reads MSENKDKNGRKSGKSKKSFKERCCLL. Cysteine 203 carries the post-translational modification Cysteine methyl ester. Cysteine 203 carries the S-geranylgeranyl cysteine lipid modification. A propeptide spans 204-206 (removed in mature form); the sequence is CLL.

It belongs to the small GTPase superfamily. Ras family. In terms of assembly, interacts with EXOC2/Sec5 and EXOC8/Exo84. Interacts (via effector domain) with RALBP1. Post-translationally, prenylation is essential for membrane localization. In terms of processing, the farnesylated form confers resistance to the proapoptotic and anti-anchorage-dependent growth effects of some geranylgeranyltransferase I inhibitors.

It localises to the cell membrane. The protein localises to the midbody. It catalyses the reaction GTP + H2O = GDP + phosphate + H(+). Alternates between an inactive form bound to GDP and an active form bound to GTP. Activated by a guanine nucleotide-exchange factor (GEF) and inactivated by a GTPase-activating protein (GAP). In terms of biological role, multifunctional GTPase involved in a variety of cellular processes including gene expression, cell migration, cell proliferation, oncogenic transformation and membrane trafficking. Accomplishes its multiple functions by interacting with distinct downstream effectors. Acts as a GTP sensor for GTP-dependent exocytosis of dense core vesicles. Required both to stabilize the assembly of the exocyst complex and to localize functional exocyst complexes to the leading edge of migrating cells. Required for suppression of apoptosis. In late stages of cytokinesis, upon completion of the bridge formation between dividing cells, mediates exocyst recruitment to the midbody to drive abscission. Involved in ligand-dependent receptor mediated endocytosis of the EGF and insulin receptors. The polypeptide is Ras-related protein Ral-B (Ralb) (Rattus norvegicus (Rat)).